A 146-amino-acid polypeptide reads, in one-letter code: MNILLINGPNLNLLGTREPEIYGNKTLNDIEKDLNKVAKEKSINLECFQSNHEGEIVDKIQSSVSSISGILINAGAFTHTSISIRDALIGSKIPFVELHISNIFSREEFRKESFLTDKAIGIISGFGITSYFLALEGIIEFLSINN.

Y22 acts as the Proton acceptor in catalysis. 3 residues coordinate substrate: N73, H79, and D86. The active-site Proton donor is the H99. Substrate-binding positions include 100–101 (IS) and R110.

Belongs to the type-II 3-dehydroquinase family. Homododecamer.

It catalyses the reaction 3-dehydroquinate = 3-dehydroshikimate + H2O. It functions in the pathway metabolic intermediate biosynthesis; chorismate biosynthesis; chorismate from D-erythrose 4-phosphate and phosphoenolpyruvate: step 3/7. Its function is as follows. Catalyzes a trans-dehydration via an enolate intermediate. The chain is 3-dehydroquinate dehydratase from Prochlorococcus marinus subsp. pastoris (strain CCMP1986 / NIES-2087 / MED4).